The chain runs to 365 residues: Galactoside alpha-(1,2)-fucosyltransferase 1 (365 aa).

Topologically, residues methionine 1–glutamine 8 are cytoplasmic. The chain crosses the membrane as a helical; Signal-anchor for type II membrane protein span at residues leucine 9 to leucine 25. The Lumenal segment spans residues histidine 26–proline 365. Residues asparagine 65 and asparagine 327 are each glycosylated (N-linked (GlcNAc...) asparagine).

Belongs to the glycosyltransferase 11 family.

It is found in the golgi apparatus. It localises to the golgi stack membrane. It catalyses the reaction a beta-D-galactosyl-(1-&gt;4)-N-acetyl-beta-D-glucosaminyl derivative + GDP-beta-L-fucose = an alpha-L-Fuc-(1-&gt;2)-beta-D-Gal-(1-&gt;4)-beta-D-GlcNAc derivative + GDP + H(+). The enzyme catalyses a ganglioside GA1 + GDP-beta-L-fucose = a ganglioside Fuc-GA1 + GDP + H(+). It carries out the reaction a beta-D-Gal-(1-&gt;3)-beta-D-GlcNAc-(1-&gt;3)-beta-D-Gal-(1-&gt;4)-beta-D-Glc-(1&lt;-&gt;1')-Cer(d18:1(4E)) + GDP-beta-L-fucose = alpha-L-fucosyl-(1-&gt;2)- beta-D-galactosyl-(1-&gt;3)-N-acetyl-beta-D-glucosaminyl-(1-&gt;3)-beta-D-galactosyl-(1-&gt;4)-beta-D-glucosyl-(1&lt;-&gt;1')-N-acylsphing-4-enine + GDP + H(+). The catalysed reaction is a neolactoside nLc4Cer(d18:1(4E)) + GDP-beta-L-fucose = a neolactoside IV(2)-alpha-Fuc-nLc4Cer(d18:1(4E)) + GDP + H(+). It catalyses the reaction a ganglioside GM1 + GDP-beta-L-fucose = a ganglioside Fuc-GM1 + GDP + H(+). The enzyme catalyses beta-D-galactosyl-(1-&gt;3)-N-acetyl-D-galactosamine + GDP-beta-L-fucose = alpha-L-fucosyl-(1-&gt;2)-beta-D-galactosyl-(1-&gt;3)-N-acetyl-D-galactosamine + GDP + H(+). Its pathway is protein modification; protein glycosylation. Its function is as follows. Catalyzes the transfer of L-fucose, from a guanosine diphosphate-beta-L-fucose, to the terminal galactose residue of glycoconjugates through an alpha(1,2) linkage leading to H antigen synthesis that is an intermediate substrate in the synthesis of ABO blood group antigens. H antigen is essential for maturation of the glomerular layer of the main olfactory bulb, in cell migration and early cell-cell contacts during tumor associated angiogenesis. Preferentially fucosylates soluble lactose and to a lesser extent fucosylates glycolipids gangliosides GA1 and GM1a. This chain is Galactoside alpha-(1,2)-fucosyltransferase 1, found in Homo sapiens (Human).